A 345-amino-acid chain; its full sequence is Anthranilate phosphoribosyltransferase (345 aa).

5-phospho-alpha-D-ribose 1-diphosphate is bound by residues Gly79, 82–83 (GD), Thr87, 89–92 (NVST), 106–114 (KHGNRAVSG), and Ser118. Position 79 (Gly79) interacts with anthranilate. Ser91 serves as a coordination point for Mg(2+). An anthranilate-binding site is contributed by Asn109. Arg164 contributes to the anthranilate binding site. The Mg(2+) site is built by Asp223 and Glu224.

The protein belongs to the anthranilate phosphoribosyltransferase family. In terms of assembly, homodimer. Requires Mg(2+) as cofactor.

The catalysed reaction is N-(5-phospho-beta-D-ribosyl)anthranilate + diphosphate = 5-phospho-alpha-D-ribose 1-diphosphate + anthranilate. Its pathway is amino-acid biosynthesis; L-tryptophan biosynthesis; L-tryptophan from chorismate: step 2/5. Catalyzes the transfer of the phosphoribosyl group of 5-phosphorylribose-1-pyrophosphate (PRPP) to anthranilate to yield N-(5'-phosphoribosyl)-anthranilate (PRA). In Saccharolobus islandicus (strain L.S.2.15 / Lassen #1) (Sulfolobus islandicus), this protein is Anthranilate phosphoribosyltransferase.